The primary structure comprises 1360 residues: MGNQQSSGIEGSKPISAFYYNNISTVISRDGFYFFNNQSQRFESSKRPITFVIYDEEGNQFITGEDDFFIRLYNEDGTYIKQLPNLQSNITTDVIAISHQDFIRVLFPIRNIDFHQINSNSNNSNTMLLSGGMDGTIRLWQVETGSLLAVYNQDISKVTMNGIIDTTSAGITALTFDPTNLLVISGTSDGIVRKHSLRERVIMGTFIGHSRGAILNLLLTKHGHLLSSSMDRTIRLWDIDSGKQITGCKYFSQTMVYDHHRDIVFAASDTGTIAVIQIVKDLNNSWSLKKIKVLDLKKPAILHLHYNTYVDQLTVTSIETNIASVQNATGIPFESVENDYKKQVNLVQGLWETTNNRLTITPSQSNNSLAKSQSINNQLNQSTTSTINQQQQQQQQQQQQQQQQQQQQQQYEDEFEDEYIDNQIKEKQQQLLQQQQQQQQQQQNEEEPIEDYIFSNEISSELTEEFIQLSIEELKNIKLTNMIENTLNSDQMILIDRLKQLEFLGNELFEHQSSQEEKEYNEARKLKYVNGLTQFQDSIEEMSEDYVSCMRMLIKTNDADIVLDTDNCKDIKIRSLEQKRMEILERHRLELEQFQGEVDRELSVFSDQQLPLITKKVANECFENKKRLLNSQESIEKSIQTYLSNTFPAVNQRYHLGPLISENSTTVFRAFDCKSLIPVAVKVLPPVALNIPVHENLTKVYQVCQTPQSIYVIMEPSTTSLKPLVESMDQHQLPISMVISIMKQLLQCLLFLHSSSLVYRDLNPSRVLLTTTTTTANDDVDCELQQQQQQQVKVKLTHFGIMRSLQGNVDSEPAEDGMIYGSPEIFGRVINTESDIWSLGVIFIYLLQTKQERTKPLFHGHNNKSVIESIVKIVGRPFQKDIDRMIANGNMTSDAIQLLQYAASLPVPFEDSIDNLRSHCSLASDSALDLLTQMLQFVPHKRISIEQALSHPFILNLPKQQQQQQQQKQQQQQQQQQQQEIIPKDDSLTDISSNKQETVVYDANIQINQEDLISKIKENEIQKEIDFKENQINEEIKEDVKEEIEEDIKEEIKEEIKEESKEVQEEAKEEIKEEIQIETQEVKEEIKEEVQVEIKEEKIKEEIKEEIKEETQEEIKEENKDEIQETIKEEVQVEIKEEIKEETQEEIKEILNEVQVKEEVKEEIQEEVSQETLSEIQEEVKEEIQEDIKEEVKEEIQNEIREEIQNEIREEIKEEIKKVSEEIQNEIQEEVKEEIQNEIQEEQQDTIKEEIQEIKQEIISERDTNQEGEISDTIVSDSKEADSIIEGPVTLERDNKNASDHDDEQQFVEEEIEVEEEIEVEEEIEVEEEIEVEEEIEVEEEIEVEEEIQVEDDTDKSNDF.

4 WD repeats span residues 44–83 (SSKRPITFVIYDEEGNQFITGEDDFFIRLYNEDGTYIKQL), 109–152 (IRNI…AVYN), 166–205 (TTSAGITALTFDPTNLLVISGTSDGIVRKHSLRERVIMGT), and 208–247 (GHSRGAILNLLLTKHGHLLSSSMDRTIRLWDIDSGKQITG). Residues 636-954 (EKSIQTYLSN…IEQALSHPFI (319 aa)) form the Protein kinase domain. Residues 959-979 (KQQQQQQQQKQQQQQQQQQQQ) show a composition bias toward low complexity. 3 disordered regions span residues 959–989 (KQQQQQQQQKQQQQQQQQQQQEIIPKDDSLT), 1258–1311 (IISE…VEEE), and 1331–1360 (EVEEEIEVEEEIEVEEEIQVEDDTDKSNDF). Coiled-coil stretches lie at residues 1014–1269 (SKIK…QEGE) and 1297–1352 (NASD…QVED). The segment covering 1291-1300 (LERDNKNASD) has biased composition (basic and acidic residues). 2 stretches are compositionally biased toward acidic residues: residues 1301–1311 (HDDEQQFVEEE) and 1331–1354 (EVEEEIEVEEEIEVEEEIQVEDDT).

The protein belongs to the protein kinase superfamily. CMGC Ser/Thr protein kinase family.

The sequence is that of Probable inactive protein kinase DDB_G0270444 from Dictyostelium discoideum (Social amoeba).